Here is an 835-residue protein sequence, read N- to C-terminus: Bifunctional uridylyltransferase/uridylyl-removing enzyme (835 aa).

Positions 1–316 are uridylyltransferase; it reads MTDEAEDSGP…GGKPVAERSP (316 aa). Residues 317-650 are uridylyl-removing; sequence LAEGVVEQDG…SADGPEPLGV (334 aa). One can recognise an HD domain in the interval 431-554; the sequence is VDRHLIETAV…DALATGPAAW (124 aa). The disordered stretch occupies residues 610–645; that stretch reads QTEPPADSAPAPSSPSSPSFPSPLSSPSSPSSADGP. The span at 621–630 shows a compositional bias: pro residues; that stretch reads PSSPSSPSFP. Over residues 631–642 the composition is skewed to low complexity; the sequence is SPLSSPSSPSSA. ACT domains are found at residues 651 to 736 and 765 to 835; these read ELLI…LAER and VIEV…SLRT.

It belongs to the GlnD family. Requires Mg(2+) as cofactor.

It carries out the reaction [protein-PII]-L-tyrosine + UTP = [protein-PII]-uridylyl-L-tyrosine + diphosphate. The enzyme catalyses [protein-PII]-uridylyl-L-tyrosine + H2O = [protein-PII]-L-tyrosine + UMP + H(+). Uridylyltransferase (UTase) activity is inhibited by glutamine, while glutamine activates uridylyl-removing (UR) activity. Its function is as follows. Modifies, by uridylylation and deuridylylation, the PII regulatory proteins (GlnB and homologs), in response to the nitrogen status of the cell that GlnD senses through the glutamine level. Under low glutamine levels, catalyzes the conversion of the PII proteins and UTP to PII-UMP and PPi, while under higher glutamine levels, GlnD hydrolyzes PII-UMP to PII and UMP (deuridylylation). Thus, controls uridylylation state and activity of the PII proteins, and plays an important role in the regulation of nitrogen assimilation and metabolism. In Streptomyces coelicolor (strain ATCC BAA-471 / A3(2) / M145), this protein is Bifunctional uridylyltransferase/uridylyl-removing enzyme.